A 468-amino-acid polypeptide reads, in one-letter code: ATP synthase subunit beta (468 aa).

153–160 (GGAGVGKT) is a binding site for ATP.

This sequence belongs to the ATPase alpha/beta chains family. In terms of assembly, F-type ATPases have 2 components, CF(1) - the catalytic core - and CF(0) - the membrane proton channel. CF(1) has five subunits: alpha(3), beta(3), gamma(1), delta(1), epsilon(1). CF(0) has three main subunits: a(1), b(2) and c(9-12). The alpha and beta chains form an alternating ring which encloses part of the gamma chain. CF(1) is attached to CF(0) by a central stalk formed by the gamma and epsilon chains, while a peripheral stalk is formed by the delta and b chains.

The protein localises to the cell inner membrane. The catalysed reaction is ATP + H2O + 4 H(+)(in) = ADP + phosphate + 5 H(+)(out). In terms of biological role, produces ATP from ADP in the presence of a proton gradient across the membrane. The catalytic sites are hosted primarily by the beta subunits. This chain is ATP synthase subunit beta, found in Nautilia profundicola (strain ATCC BAA-1463 / DSM 18972 / AmH).